The primary structure comprises 440 residues: Thymidine phosphorylase (440 aa).

It belongs to the thymidine/pyrimidine-nucleoside phosphorylase family. As to quaternary structure, homodimer.

It catalyses the reaction thymidine + phosphate = 2-deoxy-alpha-D-ribose 1-phosphate + thymine. Its pathway is pyrimidine metabolism; dTMP biosynthesis via salvage pathway; dTMP from thymine: step 1/2. The enzymes which catalyze the reversible phosphorolysis of pyrimidine nucleosides are involved in the degradation of these compounds and in their utilization as carbon and energy sources, or in the rescue of pyrimidine bases for nucleotide synthesis. The polypeptide is Thymidine phosphorylase (Escherichia coli (strain K12 / DH10B)).